The chain runs to 160 residues: Ribosomal RNA large subunit methyltransferase H (160 aa).

S-adenosyl-L-methionine is bound by residues Leu-76, Gly-108, and 127–132 (FGFMTW).

Belongs to the RNA methyltransferase RlmH family. As to quaternary structure, homodimer.

It is found in the cytoplasm. The catalysed reaction is pseudouridine(1915) in 23S rRNA + S-adenosyl-L-methionine = N(3)-methylpseudouridine(1915) in 23S rRNA + S-adenosyl-L-homocysteine + H(+). Its function is as follows. Specifically methylates the pseudouridine at position 1915 (m3Psi1915) in 23S rRNA. In Bartonella henselae (strain ATCC 49882 / DSM 28221 / CCUG 30454 / Houston 1) (Rochalimaea henselae), this protein is Ribosomal RNA large subunit methyltransferase H.